The sequence spans 470 residues: MSKKSKGKILRVIGPVVDVQFEEGDLPDIYDALVVINPQTGKKLVLEVEQLIGDNAVRTVALDTTDGLMRGLEVENTGEPIKVPVGKGALGRMFNVIGEPIDGKEDEIKDVEYWPIHKAPPSITEQSTSVEILETGIKVIDLLAPFPKGGKIGFFGGAGVGKTVLVMELIRNIAIEHHGFSMFAGVGERTREGNELYLDMQEAEVLDNTVLVFGQMNEPPGARFRVALTALTMAEYFRDVEGRDVLLFIDNIFRFVQAGSEVSALLGRMPSAVGYQPTLATDMGELQERITSTKKGSITSVQAIYVPADDITDPAPATTFTHLDATVVLSRRRAALGLYPAVDPLDSTSKMLDPNIIGQEHYEVARGVQEILQRYKDLQDIIAILGMEELSEEDKLIVQRARKIERFLSQPVHVAEKFSNIPGKYVPINETIRGFKEILEGKYDDLPEMAFYMVGTIDEAVEKAKQLQKK.

An ATP-binding site is contributed by 156–163 (GGAGVGKT).

This sequence belongs to the ATPase alpha/beta chains family. In terms of assembly, F-type ATPases have 2 components, CF(1) - the catalytic core - and CF(0) - the membrane proton channel. CF(1) has five subunits: alpha(3), beta(3), gamma(1), delta(1), epsilon(1). CF(0) has three main subunits: a(1), b(2) and c(9-12). The alpha and beta chains form an alternating ring which encloses part of the gamma chain. CF(1) is attached to CF(0) by a central stalk formed by the gamma and epsilon chains, while a peripheral stalk is formed by the delta and b chains.

The protein resides in the cell inner membrane. The catalysed reaction is ATP + H2O + 4 H(+)(in) = ADP + phosphate + 5 H(+)(out). Produces ATP from ADP in the presence of a proton gradient across the membrane. The catalytic sites are hosted primarily by the beta subunits. The protein is ATP synthase subunit beta of Thermosipho africanus (strain TCF52B).